The chain runs to 204 residues: ATP phosphoribosyltransferase (204 aa).

It belongs to the ATP phosphoribosyltransferase family. Short subfamily. In terms of assembly, heteromultimer composed of HisG and HisZ subunits.

The protein localises to the cytoplasm. It carries out the reaction 1-(5-phospho-beta-D-ribosyl)-ATP + diphosphate = 5-phospho-alpha-D-ribose 1-diphosphate + ATP. It functions in the pathway amino-acid biosynthesis; L-histidine biosynthesis; L-histidine from 5-phospho-alpha-D-ribose 1-diphosphate: step 1/9. Its function is as follows. Catalyzes the condensation of ATP and 5-phosphoribose 1-diphosphate to form N'-(5'-phosphoribosyl)-ATP (PR-ATP). Has a crucial role in the pathway because the rate of histidine biosynthesis seems to be controlled primarily by regulation of HisG enzymatic activity. In Campylobacter concisus (strain 13826), this protein is ATP phosphoribosyltransferase.